The primary structure comprises 500 residues: NAD(P)H-quinone oxidoreductase chain 4, chloroplastic (500 aa).

The next 14 membrane-spanning stretches (helical) occupy residues F3–F23, I37–F57, G84–A104, S111–F129, L134–I154, F167–L187, A208–I228, H242–I262, A272–A292, I305–D325, G330–G350, L386–T406, I416–M436, and L462–V482.

This sequence belongs to the complex I subunit 4 family.

It is found in the plastid. The protein localises to the chloroplast thylakoid membrane. It catalyses the reaction a plastoquinone + NADH + (n+1) H(+)(in) = a plastoquinol + NAD(+) + n H(+)(out). The catalysed reaction is a plastoquinone + NADPH + (n+1) H(+)(in) = a plastoquinol + NADP(+) + n H(+)(out). This chain is NAD(P)H-quinone oxidoreductase chain 4, chloroplastic, found in Panax ginseng (Korean ginseng).